The primary structure comprises 453 residues: Bifunctional protein GlmU (453 aa).

A pyrophosphorylase region spans residues 1–226 (MSFSAVILAA…PIEVEGVNNR (226 aa)). UDP-N-acetyl-alpha-D-glucosamine is bound by residues 8–11 (LAAG), Lys22, Gln73, 78–79 (GT), 100–102 (YGD), Gly137, Glu151, Asn166, and Asn224. A Mg(2+)-binding site is contributed by Asp102. Asn224 is a binding site for Mg(2+). The segment at 227–247 (IQLARLERAYQAMQAERLLEQ) is linker. The tract at residues 248-453 (GVMLRDPSRF…KGWKRPVKQK (206 aa)) is N-acetyltransferase. The UDP-N-acetyl-alpha-D-glucosamine site is built by Arg330 and Lys348. The active-site Proton acceptor is the His360. UDP-N-acetyl-alpha-D-glucosamine is bound by residues Tyr363 and Asn374. Residues Ala377, 383–384 (NY), Ser402, Ala420, and Arg437 each bind acetyl-CoA.

This sequence in the N-terminal section; belongs to the N-acetylglucosamine-1-phosphate uridyltransferase family. The protein in the C-terminal section; belongs to the transferase hexapeptide repeat family. In terms of assembly, homotrimer. It depends on Mg(2+) as a cofactor.

It localises to the cytoplasm. It carries out the reaction alpha-D-glucosamine 1-phosphate + acetyl-CoA = N-acetyl-alpha-D-glucosamine 1-phosphate + CoA + H(+). It catalyses the reaction N-acetyl-alpha-D-glucosamine 1-phosphate + UTP + H(+) = UDP-N-acetyl-alpha-D-glucosamine + diphosphate. It functions in the pathway nucleotide-sugar biosynthesis; UDP-N-acetyl-alpha-D-glucosamine biosynthesis; N-acetyl-alpha-D-glucosamine 1-phosphate from alpha-D-glucosamine 6-phosphate (route II): step 2/2. The protein operates within nucleotide-sugar biosynthesis; UDP-N-acetyl-alpha-D-glucosamine biosynthesis; UDP-N-acetyl-alpha-D-glucosamine from N-acetyl-alpha-D-glucosamine 1-phosphate: step 1/1. Its pathway is bacterial outer membrane biogenesis; LPS lipid A biosynthesis. In terms of biological role, catalyzes the last two sequential reactions in the de novo biosynthetic pathway for UDP-N-acetylglucosamine (UDP-GlcNAc). The C-terminal domain catalyzes the transfer of acetyl group from acetyl coenzyme A to glucosamine-1-phosphate (GlcN-1-P) to produce N-acetylglucosamine-1-phosphate (GlcNAc-1-P), which is converted into UDP-GlcNAc by the transfer of uridine 5-monophosphate (from uridine 5-triphosphate), a reaction catalyzed by the N-terminal domain. This Photobacterium profundum (strain SS9) protein is Bifunctional protein GlmU.